We begin with the raw amino-acid sequence, 175 residues long: Peptide deformylase (175 aa).

Cysteine 98 and histidine 140 together coordinate Fe cation. Residue glutamate 141 is part of the active site. Histidine 144 contacts Fe cation.

It belongs to the polypeptide deformylase family. It depends on Fe(2+) as a cofactor.

It carries out the reaction N-terminal N-formyl-L-methionyl-[peptide] + H2O = N-terminal L-methionyl-[peptide] + formate. Removes the formyl group from the N-terminal Met of newly synthesized proteins. Requires at least a dipeptide for an efficient rate of reaction. N-terminal L-methionine is a prerequisite for activity but the enzyme has broad specificity at other positions. The protein is Peptide deformylase of Nitrobacter hamburgensis (strain DSM 10229 / NCIMB 13809 / X14).